The primary structure comprises 904 residues: Dual specificity tyrosine-phosphorylation-regulated kinase mbk-1 (904 aa).

Disordered stretches follow at residues 1–151 (MNSG…MPPE), 250–272 (TVGR…ASSS), and 285–345 (AVPN…YNNG). A compositionally biased stretch (polar residues) spans 9 to 23 (NLQAWGQQPSSSYSN). The span at 24–35 (TQQQHGQITGQI) shows a compositional bias: low complexity. Basic and acidic residues predominate over residues 59 to 75 (ELEKSKKIAEQPTEHPQ). Positions 112-123 (NNSNSQNFFPQQ) are enriched in low complexity. The segment covering 286 to 297 (VPNTSSSGNQPH) has biased composition (polar residues). The Protein kinase domain maps to 367-690 (ILSDTPVGKG…TLFPVSHTAY (324 aa)). ATP is bound by residues 373–381 (VGKGSFGQV) and Lys396. Catalysis depends on Asp495, which acts as the Proton acceptor. Disordered regions lie at residues 717-830 (YRPV…DQAE) and 881-904 (MSHG…NNKL). The segment covering 721-733 (PTSSHPISVTSSF) has biased composition (polar residues). The segment covering 749-820 (SQQNYHNPNY…VQQHSSSSSR (72 aa)) has biased composition (low complexity). Polar residues predominate over residues 881–890 (MSHGNVNAGS). Basic and acidic residues predominate over residues 892–904 (RDMEKHDYPNNKL).

Belongs to the protein kinase superfamily. CMGC Ser/Thr protein kinase family. MNB/DYRK subfamily. Mg(2+) is required as a cofactor.

Its subcellular location is the nucleus. The enzyme catalyses L-seryl-[protein] + ATP = O-phospho-L-seryl-[protein] + ADP + H(+). The catalysed reaction is L-threonyl-[protein] + ATP = O-phospho-L-threonyl-[protein] + ADP + H(+). It carries out the reaction L-tyrosyl-[protein] + ATP = O-phospho-L-tyrosyl-[protein] + ADP + H(+). Possible role in the function of olfactory neurons. The protein is Dual specificity tyrosine-phosphorylation-regulated kinase mbk-1 of Caenorhabditis briggsae.